Here is a 626-residue protein sequence, read N- to C-terminus: ABC transporter G family member 8 (626 aa).

The 245-residue stretch at 56 to 300 (VNLDNKTENS…SLGYPCPNNT (245 aa)) folds into the ABC transporter domain. ATP is bound at residue 90-97 (GPSGSGKS). Residues 373–621 (GNALSRVITA…SLSYFALHFL (249 aa)) form the ABC transmembrane type-2 domain. Transmembrane regions (helical) follow at residues 376-396 (LSRV…FAGL), 409-429 (TLFF…TLFL), 447-467 (FPYF…VTLV), 485-505 (FFFA…FISS), 515-535 (LTFS…GFYV), 543-563 (AFGW…VVIN), and 600-620 (FGVL…ALHF).

This sequence belongs to the ABC transporter superfamily. ABCG family. Eye pigment precursor importer (TC 3.A.1.204) subfamily.

The protein resides in the membrane. The chain is ABC transporter G family member 8 (abcG8) from Dictyostelium discoideum (Social amoeba).